The following is a 431-amino-acid chain: Divergent protein kinase domain 1B (431 aa).

The Cytoplasmic segment spans residues 1–30 (MRRLRRLVHLVLLCPFSKGLQGRLPGLRVK). The short motif at 5-6 (RR) is the May mediate ER retention element. A helical membrane pass occupies residues 31 to 51 (YVLLVWLGIFVGSWMVYVHYS). Residues 52–431 (SYSELCRGHV…WREISNTNYS (380 aa)) lie on the Lumenal side of the membrane. 2 disulfides stabilise this stretch: C57–C94 and C62–C117.

It belongs to the DIPK family. Post-translationally, among the many cysteines in the lumenal domain, most are probably involved in disulfide bonds. Expressed in kidney, testis, lung, heart, stomach, intestine, pancreas, liver and salivary gland. Strongly expressed in acute pancreatitis, brain, and in peripheral endothelial cells.

The protein localises to the endoplasmic reticulum membrane. The chain is Divergent protein kinase domain 1B (Dipk1b) from Mus musculus (Mouse).